The chain runs to 78 residues: Putative membrane protein insertion efficiency factor (78 aa).

The protein belongs to the UPF0161 family.

It localises to the cell membrane. Functionally, could be involved in insertion of integral membrane proteins into the membrane. In Limosilactobacillus reuteri (strain DSM 20016) (Lactobacillus reuteri), this protein is Putative membrane protein insertion efficiency factor.